Consider the following 181-residue polypeptide: ADP-ribosylation factor 2 (181 aa).

Residue G2 is the site of N-myristoyl glycine attachment. GTP-binding positions include 24 to 31, 67 to 71, and 126 to 129; these read GLDAAGKT, DVGGQ, and NKQD.

This sequence belongs to the small GTPase superfamily. Arf family.

The protein localises to the golgi apparatus. Its function is as follows. GTP-binding protein that functions as an allosteric activator of the cholera toxin catalytic subunit, an ADP-ribosyltransferase. Involved in protein trafficking; may modulate vesicle budding and uncoating within the Golgi apparatus. The protein is ADP-ribosylation factor 2 (ARF2) of Bos taurus (Bovine).